The primary structure comprises 540 residues: Tyrosine-protein kinase transforming protein erbB (540 aa).

In terms of domain architecture, Protein kinase spans 132-399 (FKKVKVLGFG…KMARDPPRYL (268 aa)). ATP-binding positions include 138-146 (LGFGAFGTV) and lysine 165. The active-site Proton acceptor is aspartate 257.

The protein belongs to the protein kinase superfamily. Tyr protein kinase family. EGF receptor subfamily.

It catalyses the reaction L-tyrosyl-[protein] + ATP = O-phospho-L-tyrosyl-[protein] + ADP + H(+). The polypeptide is Tyrosine-protein kinase transforming protein erbB (V-ERBB) (Avian erythroblastosis virus (strain ts167)).